The primary structure comprises 130 residues: Ribosome-binding factor A (130 aa).

Belongs to the RbfA family. Monomer. Binds 30S ribosomal subunits, but not 50S ribosomal subunits or 70S ribosomes.

Its subcellular location is the cytoplasm. One of several proteins that assist in the late maturation steps of the functional core of the 30S ribosomal subunit. Associates with free 30S ribosomal subunits (but not with 30S subunits that are part of 70S ribosomes or polysomes). Required for efficient processing of 16S rRNA. May interact with the 5'-terminal helix region of 16S rRNA. The polypeptide is Ribosome-binding factor A (Flavobacterium psychrophilum (strain ATCC 49511 / DSM 21280 / CIP 103535 / JIP02/86)).